The following is a 97-amino-acid chain: Large ribosomal subunit protein bL36m (97 aa).

The protein belongs to the bacterial ribosomal protein bL36 family. In terms of assembly, component of the mitochondrial ribosome large subunit (39S) which comprises a 16S rRNA and about 50 distinct proteins.

The protein resides in the mitochondrion. This Rattus norvegicus (Rat) protein is Large ribosomal subunit protein bL36m (Mrpl36).